A 474-amino-acid chain; its full sequence is L-arabinose isomerase (474 aa).

Mn(2+) contacts are provided by glutamate 306, glutamate 331, histidine 348, and histidine 447.

The protein belongs to the arabinose isomerase family. Mn(2+) serves as cofactor.

The catalysed reaction is beta-L-arabinopyranose = L-ribulose. It functions in the pathway carbohydrate degradation; L-arabinose degradation via L-ribulose; D-xylulose 5-phosphate from L-arabinose (bacterial route): step 1/3. Functionally, catalyzes the conversion of L-arabinose to L-ribulose. The polypeptide is L-arabinose isomerase (Levilactobacillus brevis (strain ATCC 367 / BCRC 12310 / CIP 105137 / JCM 1170 / LMG 11437 / NCIMB 947 / NCTC 947) (Lactobacillus brevis)).